A 466-amino-acid chain; its full sequence is MIKPRTPPGVLELLPREQIAFQRMLDVIRRNYERFGFLPVETPVFELSDVLLTKSGGETERQVYFVQSTGTLANAAESGATRLPELALRFDLTVPLARYVAEYEHVLAFPFRRYQIQRVYRGERAQRGRFREFYQCDIDVIGKQTLSIRYDAEVLAVIHAVFSELGIGDFQVQLNNRKVLRGFLESQGVRDGELQLAVLREVDKLDKRGVLDVRDTLIGQGFGIPAAQVENILTFVATRSTSHADALARLDALIQDSGPEAHDMLRQGVAELREVLTLVNVLGVPEHAYRLNFSIARGLDYYTGTVYETALINHPQIGSICSGGRYENLANHYTQSKLPGVGISIGLTRLFWQLRDAGLIDGIAESSVQAMVVLMDEATLDDALDIARRLRIGGINTEVQMEAKKLSKQFQYASRAGIRFVVLAGDDERARGVVAVKDLTREQQFEIPREELASTLQVELEQAKVM.

It belongs to the class-II aminoacyl-tRNA synthetase family. As to quaternary structure, homodimer.

It localises to the cytoplasm. It catalyses the reaction tRNA(His) + L-histidine + ATP = L-histidyl-tRNA(His) + AMP + diphosphate + H(+). This is Histidine--tRNA ligase from Xylella fastidiosa (strain M23).